The chain runs to 391 residues: MVTVDEVRKAQRAEGPATILAIGTATPPNCVDQSTYPDYYFRITKSEHRTELKEKFQRMCDKSRIKKRYMYLTEEILKENPSMCEYMAPSLDARQDMVVVEIPKLGKEAATKAIKEWGQLKSKITHLVFCTTSGVDMPGADYQLTKLLGLRPSVKRLMMYQQGCFAGGTVLRLAKDLAENNKGARVLAVCSEITAVTFRGPSDTHLDSLVGQALFGDGAAAIIVGSDPLPDIERPLFELVSAAQTILPDSDGAIDGHLHEVGLTFHLLKDVPGLISKNIEKSLNEAFKPLDITDWNSLFWIAHPGGPAILDQVEAKLGLKPEKLEATRNILSEYGNMSSACVLLILDEVRRKSVANGHKTTGEGLEWGVLFGFGPGLTVETVVLHSVAAST.

C164 is a catalytic residue.

Belongs to the thiolase-like superfamily. Chalcone/stilbene synthases family. As to quaternary structure, homodimer.

The polypeptide is Inactive polyketide synthase 2 (PKS2) (Rubus idaeus (Raspberry)).